Here is a 221-residue protein sequence, read N- to C-terminus: HP1-HOAP-interacting protein (221 aa).

The disordered stretch occupies residues 69–113 (NAKRHKMARETAASITDVSGSQSSSHQSAPSLHVSGQSSEFGASY). Residues 86 to 103 (VSGSQSSSHQSAPSLHVS) are compositionally biased toward low complexity.

Component of the HipHop-HOAP telomere-capping complex, composed of at least HipHop and cav/HOAP, and may include Su(var)205/HP1; HipHop and cav/HOAP, but not Su(var)205, are interdependent for their protein stability. Interacts (via N-terminus) with cav/HOAP and Su(var)205/HP1. The HipHop-HOAP complex recruits the MTV complex, consisting of moi/modigliani, tea and ver/verrocchio, to telomeres to form the terminin telomere-capping complex.

Its subcellular location is the nucleus. The protein resides in the chromosome. It is found in the telomere. Part of the HipHop-HOAP complex that recruits the MTV complex to form the terminin telomere-capping complex, which binds to chromosome ends in a sequence-independent manner and prevents telomere fusion. This is HP1-HOAP-interacting protein from Drosophila melanogaster (Fruit fly).